Here is a 640-residue protein sequence, read N- to C-terminus: Threonine--tRNA ligase (640 aa).

Residues 1–61 form the TGS domain; it reads MLVVTLPDGS…DKDSQLAIIT (61 aa). Residues 242–533 form a catalytic region; sequence DHRRLGKQLD…LIENHTGNMP (292 aa). Positions 333, 384, and 510 each coordinate Zn(2+).

It belongs to the class-II aminoacyl-tRNA synthetase family. In terms of assembly, homodimer. Zn(2+) is required as a cofactor.

It localises to the cytoplasm. The enzyme catalyses tRNA(Thr) + L-threonine + ATP = L-threonyl-tRNA(Thr) + AMP + diphosphate + H(+). Its function is as follows. Catalyzes the attachment of threonine to tRNA(Thr) in a two-step reaction: L-threonine is first activated by ATP to form Thr-AMP and then transferred to the acceptor end of tRNA(Thr). Also edits incorrectly charged L-seryl-tRNA(Thr). The chain is Threonine--tRNA ligase from Polynucleobacter necessarius subsp. necessarius (strain STIR1).